An 809-amino-acid polypeptide reads, in one-letter code: Trimethylamine-N-oxide reductase 2 (809 aa).

The segment at residues 1-31 (MTLTRREFIKHSGIAAGTLVVTSAAPLPAWA) is a signal peptide (tat-type signal). Serine 176 contributes to the Mo-bis(molybdopterin guanine dinucleotide) binding site.

Belongs to the prokaryotic molybdopterin-containing oxidoreductase family. It depends on Mo-bis(molybdopterin guanine dinucleotide) as a cofactor. In terms of processing, predicted to be exported by the Tat system. The position of the signal peptide cleavage has not been experimentally proven.

It localises to the periplasm. It carries out the reaction trimethylamine + 2 Fe(III)-[cytochrome c] + H2O = trimethylamine N-oxide + 2 Fe(II)-[cytochrome c] + 3 H(+). Reduces trimethylamine-N-oxide (TMAO) into trimethylamine; an anaerobic reaction coupled to energy-yielding reactions. Can also reduce other N- and S-oxide compounds such as 4-methylmorpholine-N-oxide and biotin sulfoxide (BSO), but with a lower catalytic efficiency. The chain is Trimethylamine-N-oxide reductase 2 (torZ) from Escherichia coli O6:H1 (strain CFT073 / ATCC 700928 / UPEC).